The sequence spans 50 residues: U2-ctenitoxin-Pk1a (50 aa).

Cystine bridges form between Cys-1–Cys-15, Cys-8–Cys-21, Cys-12–Cys-47, Cys-14–Cys-31, and Cys-23–Cys-29.

In terms of tissue distribution, expressed by the venom gland.

The protein localises to the secreted. Insecticidal neurotoxin that reversibly inhibits the N-methyl-D-aspartate (NMDA)-subtype of ionotropic glutamate receptor (GRIN) and inhibits inactivation of insect sodium channels (Nav). In vivo, is highly toxic to insects. The protein is U2-ctenitoxin-Pk1a of Phoneutria keyserlingi (Brazilian wandering spider).